The chain runs to 574 residues: Probable inactive serine/threonine-protein kinase slob2 (574 aa).

A helical membrane pass occupies residues 6-26 (YIIIAAVGGFAILTFIIIVVL). The Protein kinase domain occupies 166–346 (YADRGSLRDF…PLHRLTYTSR (181 aa)). Residue Asn-358 is glycosylated (N-linked (GlcNAc...) asparagine). The interval 366 to 386 (SKPNSKDLSQPKLKDLKKQKK) is disordered. 8 N-linked (GlcNAc...) asparagine glycosylation sites follow: Asn-440, Asn-449, Asn-453, Asn-456, Asn-464, Asn-470, Asn-477, and Asn-483. Positions 450–493 (TTTNTTNTSTSSSLNSSFNSNVSTSYSNATTTTNTTSASSVSPP) are enriched in low complexity. The segment at 450–574 (TTTNTTNTST…DKSGPLLKKS (125 aa)) is disordered. The segment covering 494–539 (ISSPPPPPPPPPPSKSSGPPPPPPPPPKSSGPPPPPPPKSSPPPPA) has biased composition (pro residues). The segment covering 546 to 556 (LLSSIESFSSS) has biased composition (low complexity).

This sequence belongs to the protein kinase superfamily. Ser/Thr protein kinase family.

The protein localises to the membrane. The polypeptide is Probable inactive serine/threonine-protein kinase slob2 (slob2) (Dictyostelium discoideum (Social amoeba)).